The chain runs to 103 residues: uncharacterized protein (103 aa).

A run of 3 helical transmembrane segments spans residues 12–34 (GFSW…LTIS), 49–66 (TLMS…ALIA), and 79–101 (FARG…VAGG).

It is found in the cell membrane. This is an uncharacterized protein from Pasteurella multocida (strain Pm70).